The chain runs to 583 residues: Propane 2-monooxygenase operon transcriptional activator MimR (583 aa).

Residues 320–513 (LAGQSSSFRR…LRHVLTETVR (194 aa)) form the Sigma-54 factor interaction domain. ATP-binding positions include 349 to 356 (ERGSGRTY) and 395 to 404 (SADFAVIVSD).

In terms of biological role, acts as a transcriptional activator of the mimABCD operon encoding the propane 2-monooxygenase complex. This is Propane 2-monooxygenase operon transcriptional activator MimR from Mycolicibacterium smegmatis (strain ATCC 700084 / mc(2)155) (Mycobacterium smegmatis).